Reading from the N-terminus, the 193-residue chain is MTDYLLLFVGTVLVNNFVLVKFLGLCPFMGVSKKLETAMGMGLATTFVMTLASICAWLIDTWILIPLDLIYLRTLAFILVIAVVVQFTEMVVRKTSPALYRLLGIFLPLITTNCAVLGVALLNINLGHNFLQSALYGFSAAVGFSLVMVLFAAIRERLAVADVPAPFRGNAIALITAGLMSLAFMGFSGLVKL.

The next 6 helical transmembrane spans lie at 5-25, 47-67, 72-92, 102-122, 134-154, and 171-191; these read LLLF…FLGL, FVMT…LIPL, LRTL…EMVV, LLGI…VALL, ALYG…FAAI, and AIAL…SGLV.

It belongs to the NqrDE/RnfAE family. The complex is composed of six subunits: RnfA, RnfB, RnfC, RnfD, RnfE and RnfG.

The protein localises to the cell inner membrane. Part of a membrane-bound complex that couples electron transfer with translocation of ions across the membrane. This is Ion-translocating oxidoreductase complex subunit A from Citrobacter koseri (strain ATCC BAA-895 / CDC 4225-83 / SGSC4696).